The sequence spans 176 residues: ATP synthase subunit b (176 aa).

Residues 26–45 form a helical membrane-spanning segment; the sequence is VINLAIIIGVLVYFGRGLLG.

This sequence belongs to the ATPase B chain family. F-type ATPases have 2 components, F(1) - the catalytic core - and F(0) - the membrane proton channel. F(1) has five subunits: alpha(3), beta(3), gamma(1), delta(1), epsilon(1). F(0) has four main subunits: a(1), b(1), b'(1) and c(10-14). The alpha and beta chains form an alternating ring which encloses part of the gamma chain. F(1) is attached to F(0) by a central stalk formed by the gamma and epsilon chains, while a peripheral stalk is formed by the delta, b and b' chains.

Its subcellular location is the cellular thylakoid membrane. F(1)F(0) ATP synthase produces ATP from ADP in the presence of a proton or sodium gradient. F-type ATPases consist of two structural domains, F(1) containing the extramembraneous catalytic core and F(0) containing the membrane proton channel, linked together by a central stalk and a peripheral stalk. During catalysis, ATP synthesis in the catalytic domain of F(1) is coupled via a rotary mechanism of the central stalk subunits to proton translocation. Its function is as follows. Component of the F(0) channel, it forms part of the peripheral stalk, linking F(1) to F(0). The chain is ATP synthase subunit b from Synechococcus sp. (strain PCC 6716).